A 372-amino-acid chain; its full sequence is Chloroplast protein FOR GROWTH AND FERTILITY 2 (372 aa).

A disordered region spans residues 1–20; sequence MDRLLQPPSSHSIAPSKFQS. The transit peptide at 1–78 directs the protein to the chloroplast; sequence MDRLLQPPSS…NQSSNFLIAS (78 aa). Residues 7–20 show a composition bias toward polar residues; sequence PPSSHSIAPSKFQS. 7 consecutive transmembrane segments (helical) span residues 109 to 129, 161 to 181, 195 to 215, 231 to 251, 281 to 301, 309 to 329, and 352 to 372; these read VILV…PPAF, FFAG…LAPL, ALWG…FLLL, VVGL…SEMP, GIVH…LALP, FLIM…VFIG, and LVAI…FSLY.

As to expression, mostly expressed in leaves, stems and flowers, to a lower extent, in roots, floral bud, inflorescence and siliques, and, barely, in seedlings.

Its subcellular location is the plastid. The protein localises to the chloroplast membrane. It localises to the plastid membrane. Functionally, together with CGF1, essential protein which supports female gametogenesis and embryogenesis, probably by securing local energy supply. The polypeptide is Chloroplast protein FOR GROWTH AND FERTILITY 2 (Arabidopsis thaliana (Mouse-ear cress)).